We begin with the raw amino-acid sequence, 241 residues long: NAD-dependent protein deacylase (241 aa).

The 237-residue stretch at 1–237 (MNFPYRNIVV…PKLVDEILAL (237 aa)) folds into the Deacetylase sirtuin-type domain. Position 13–32 (13–32 (GAGISAESGIQTFRAQDGLW)) interacts with NAD(+). Residues Tyr-57 and Arg-60 each coordinate substrate. Position 94–97 (94–97 (QNID)) interacts with NAD(+). Residue His-112 is the Proton acceptor of the active site. 2 residues coordinate Zn(2+): Cys-120 and Cys-139. NAD(+) is bound by residues 179-181 (GTS), 205-207 (NLE), and Ala-223.

It belongs to the sirtuin family. Class III subfamily. Monomer. Requires Zn(2+) as cofactor.

It localises to the cytoplasm. It is found in the host cytoplasm. The protein localises to the host cytosol. The protein resides in the host nucleus. It catalyses the reaction N(6)-acetyl-L-lysyl-[protein] + NAD(+) + H2O = 2''-O-acetyl-ADP-D-ribose + nicotinamide + L-lysyl-[protein]. The catalysed reaction is N(6)-succinyl-L-lysyl-[protein] + NAD(+) + H2O = 2''-O-succinyl-ADP-D-ribose + nicotinamide + L-lysyl-[protein]. In terms of biological role, NAD-dependent lysine deacetylase and desuccinylase that specifically removes acetyl and succinyl groups on target proteins. Modulates the activities of several proteins which are inactive in their acylated form. In the intracellular pathogen V.parahaemolyticus, this enzyme regulates host response during infection by induction of host histone deacetylation; it specifically causes deacetylation of histone lysine residues H3K56, H3K9, H3K18 and H4K16 which results in transcriptional repression of several host genes involved in epigenetic regulation, immune response, and autophagy. In Vibrio parahaemolyticus serotype O3:K6 (strain RIMD 2210633), this protein is NAD-dependent protein deacylase.